A 473-amino-acid chain; its full sequence is GTPase Der (473 aa).

EngA-type G domains lie at 5 to 170 (PVVA…PNQE) and 178 to 351 (LKLA…QSSM). GTP contacts are provided by residues 11–18 (GRPNVGKS), 58–62 (DTGGI), 123–126 (NKVD), 184–191 (GRPNVGKS), 231–235 (DTAGV), and 296–299 (NKWD). The KH-like domain maps to 352–436 (FEVSTNRLTQ…PLNVVFKLNE (85 aa)). A compositionally biased stretch (polar residues) spans 438–454 (PYANKSDTPTKAKTQQL). A disordered region spans residues 438-473 (PYANKSDTPTKAKTQQLRQRERNRAQKFTTKDKKPR). Positions 455-473 (RQRERNRAQKFTTKDKKPR) are enriched in basic and acidic residues.

This sequence belongs to the TRAFAC class TrmE-Era-EngA-EngB-Septin-like GTPase superfamily. EngA (Der) GTPase family. In terms of assembly, associates with the 50S ribosomal subunit.

Its function is as follows. GTPase that plays an essential role in the late steps of ribosome biogenesis. The chain is GTPase Der from Psychrobacter arcticus (strain DSM 17307 / VKM B-2377 / 273-4).